The sequence spans 128 residues: Large ribosomal subunit protein bL17 (128 aa).

It belongs to the bacterial ribosomal protein bL17 family. In terms of assembly, part of the 50S ribosomal subunit. Contacts protein L32.

In Pseudomonas syringae pv. tomato (strain ATCC BAA-871 / DC3000), this protein is Large ribosomal subunit protein bL17.